A 339-amino-acid polypeptide reads, in one-letter code: Glyceraldehyde-3-phosphate dehydrogenase (339 aa).

Residues 13–14 (RI), Asp35, and Lys84 each bind NAD(+). D-glyceraldehyde 3-phosphate-binding positions include 156-158 (SCT), Thr187, 216-217 (TG), and Arg239. Cys157 functions as the Nucleophile in the catalytic mechanism. Asn321 is an NAD(+) binding site.

It belongs to the glyceraldehyde-3-phosphate dehydrogenase family. As to quaternary structure, homotetramer.

It is found in the cytoplasm. The catalysed reaction is D-glyceraldehyde 3-phosphate + phosphate + NAD(+) = (2R)-3-phospho-glyceroyl phosphate + NADH + H(+). Its pathway is carbohydrate degradation; glycolysis; pyruvate from D-glyceraldehyde 3-phosphate: step 1/5. The protein is Glyceraldehyde-3-phosphate dehydrogenase (G3PD) of Brugia malayi (Filarial nematode worm).